Consider the following 734-residue polypeptide: Tripartite terminase subunit 3 (734 aa).

The Nuclear localization signal motif lies at proline 183 to valine 189. Residues valine 258 to threonine 265 carry the Walker A motif motif. A Walker B motif motif is present at residues leucine 352–glutamate 357. Glutamate 357 functions as the For ATPase activity in the catalytic mechanism. Catalysis depends on for nuclease activity residues aspartate 509, glutamate 581, and aspartate 706.

It belongs to the herpesviridae TRM3 protein family. In terms of assembly, interacts with the terminase subunits TRM1 and TRM2. Interacts with portal protein.

Its subcellular location is the host nucleus. Its function is as follows. Component of the molecular motor that translocates viral genomic DNA in empty capsid during DNA packaging. Forms a tripartite terminase complex together with TRM1 and TRM2 in the host cytoplasm. Once the complex reaches the host nucleus, it interacts with the capsid portal vertex. This portal forms a ring in which genomic DNA is translocated into the capsid. TRM3 carries an RNase H-like nuclease activity that plays an important role for the cleavage of concatemeric viral DNA into unit length genomes. This is Tripartite terminase subunit 3 from Human herpesvirus 2 (strain HG52) (HHV-2).